Consider the following 264-residue polypeptide: Mannose-specific lectin CEA (264 aa).

The first 23 residues, 1–23 (MAKLLLFLLPAILGLLVPRSAVA), serve as a signal peptide directing secretion. 2 Bulb-type lectin domains span residues 26-131 (TNYL…PWVP) and 145-252 (NNLL…PQAK). Beta-D-mannose-binding positions include 51 to 55 (QDDCN), Tyr-59, Trp-63, Gln-64, 170 to 174 (QGDCN), Tyr-178, and 182 to 185 (YGWQ). Residues 51-59 (QDDCNLVLY) carry the Carbohydrate-binding motif 1 motif. 2 disulfide bridges follow: Cys-54-Cys-74 and Cys-173-Cys-195. The Carbohydrate-binding motif 2 motif lies at 170–178 (QGDCNLVLY).

In terms of assembly, forms heterotetramer of 2 chains 1 and 2 chains 2 arranged as a dimer of chain 1 and chain 2 heterodimers.

Its subcellular location is the secreted. In terms of biological role, mannose-specific lectin. Shows agglutinating activity towards erythrocytes from rabbit. Has insecticidal activity against cotton aphids and other hemipteran insects. This is Mannose-specific lectin CEA from Colocasia esculenta (Wild taro).